A 342-amino-acid polypeptide reads, in one-letter code: DNA-directed RNA polymerase subunit alpha (342 aa).

Residues 1–239 (MTTFLAKNWS…DQLQVFINFQ (239 aa)) are alpha N-terminal domain (alpha-NTD). The segment at 254-342 (INPVLLKKVY…SLAKKHEDQY (89 aa)) is alpha C-terminal domain (alpha-CTD).

The protein belongs to the RNA polymerase alpha chain family. As to quaternary structure, homodimer. The RNAP catalytic core consists of 2 alpha, 1 beta, 1 beta' and 1 omega subunit. When a sigma factor is associated with the core the holoenzyme is formed, which can initiate transcription.

The enzyme catalyses RNA(n) + a ribonucleoside 5'-triphosphate = RNA(n+1) + diphosphate. Functionally, DNA-dependent RNA polymerase catalyzes the transcription of DNA into RNA using the four ribonucleoside triphosphates as substrates. This chain is DNA-directed RNA polymerase subunit alpha, found in Orientia tsutsugamushi (strain Ikeda) (Rickettsia tsutsugamushi).